Here is a 699-residue protein sequence, read N- to C-terminus: Sarcoplasmic reticulum histidine-rich calcium-binding protein (699 aa).

The signal sequence occupies residues 1–28 (MGHHRPWLHASVLWAGVASLLLPPAMTQ). The tract at residues 50–95 (SEEASAELRHHLHSPRDHPDENKDVSTENGHHFWSHPDREKEDEDV) is disordered. The span at 55-89 (AELRHHLHSPRDHPDENKDVSTENGHHFWSHPDRE) shows a compositional bias: basic and acidic residues. Threonine 76 is modified (phosphothreonine; by FAM20C). 10 consecutive repeat copies span residues 106–121 (HRSQ…VSGE), 134–154 (HRGH…HLPS), 155–177 (HRSH…HHHI), 180–213 (HGHR…GHQA), 214–237 (HRHR…HGPS), 238–270 (HRHQ…RHQA), 271–294 (HRHQ…RDPS), 295–318 (HRHR…GHQA), 319–342 (HRHQ…HVPD), and 343–365 (HRHQ…WHQG). A 6 X approximate tandem repeats region spans residues 106–342 (HRSQDHKVGD…SGEHHHHVPD (237 aa)). The interval 106 to 365 (HRSQDHKVGD…DVSTERWHQG (260 aa)) is 4 X tandem repeats, acidic. Phosphoserine; by FAM20C is present on residues serine 119 and serine 145. Positions 127 to 617 (HGGQARGHRG…EDTGPQDAQE (491 aa)) are disordered. 2 stretches are compositionally biased toward basic residues: residues 148–158 (HRHHLPSHRSH) and 173–183 (HHHHILRHGHR). Over residues 187-206 (GEDDEGEEEEEEEEEEEEAS) the composition is skewed to acidic residues. Basic residues predominate over residues 231–241 (HHHHGPSHRHQ). Residues 244-263 (EEDDDDDDDDDDDDDDDDVS) are compositionally biased toward acidic residues. Residues 288–298 (HHHRDPSHRHR) are compositionally biased toward basic residues. Over residues 302 to 311 (EDDNDDDDVS) the composition is skewed to acidic residues. Residues 324–335 (HRKEEVEAVSGE) show a composition bias toward basic and acidic residues. A Phosphoserine modification is found at serine 333. A compositionally biased stretch (basic residues) spans 336–347 (HHHHVPDHRHQG). A phosphoserine; by FAM20C mark is found at serine 358 and serine 431. Basic and acidic residues-rich tracts occupy residues 444–463 (SHQD…EMSH) and 470–481 (VVKDRSHLRKDD). At serine 494 the chain carries Phosphoserine; by FAM20C. Over residues 504 to 515 (QGEKGTHHGSRD) the composition is skewed to basic and acidic residues. Composition is skewed to acidic residues over residues 532–551 (QEEE…DEER) and 567–581 (SEEE…EEDE). Position 567 is a phosphoserine; by FAM20C (serine 567). The interval 627–673 (CGYCSFCNRCTECESCHCDEENMGEHCDQCQHCQFCYLCPLVCETVC) is metal-binding.

Belongs to the HRC family.

The protein resides in the sarcoplasmic reticulum lumen. Functionally, may play a role in the regulation of calcium sequestration or release in the SR of skeletal and cardiac muscle. This Homo sapiens (Human) protein is Sarcoplasmic reticulum histidine-rich calcium-binding protein (HRC).